We begin with the raw amino-acid sequence, 145 residues long: MKAVIQRVCSASVVVEGEVVGEIGQGILVLLGVEKGDDEAKASWLAEKIISLRIFGDDSDKMNLSLRDVGGSLLAVSQFTLAGNCAKGRRPSFDSAAPPEEGRRLYDHFVQAVRAKGVATATGIFQADMRVSLVNDGPVTFILER.

Residues 137 to 138 (GP) carry the Gly-cisPro motif, important for rejection of L-amino acids motif.

This sequence belongs to the DTD family. Homodimer.

The protein localises to the cytoplasm. The catalysed reaction is glycyl-tRNA(Ala) + H2O = tRNA(Ala) + glycine + H(+). It carries out the reaction a D-aminoacyl-tRNA + H2O = a tRNA + a D-alpha-amino acid + H(+). Its function is as follows. An aminoacyl-tRNA editing enzyme that deacylates mischarged D-aminoacyl-tRNAs. Also deacylates mischarged glycyl-tRNA(Ala), protecting cells against glycine mischarging by AlaRS. Acts via tRNA-based rather than protein-based catalysis; rejects L-amino acids rather than detecting D-amino acids in the active site. By recycling D-aminoacyl-tRNA to D-amino acids and free tRNA molecules, this enzyme counteracts the toxicity associated with the formation of D-aminoacyl-tRNA entities in vivo and helps enforce protein L-homochirality. This is D-aminoacyl-tRNA deacylase from Pelobacter propionicus (strain DSM 2379 / NBRC 103807 / OttBd1).